Reading from the N-terminus, the 251-residue chain is uncharacterized protein (251 aa).

The 116-residue stretch at 3–118 (KVIICDDERI…QLEHILDILV (116 aa)) folds into the Response regulatory domain. Aspartate 55 carries the post-translational modification 4-aspartylphosphate. The region spanning 152–249 (NQILSQIKQH…HMSPSDYNKQ (98 aa)) is the HTH araC/xylS-type domain. DNA-binding regions (H-T-H motif) lie at residues 169 to 190 (LDLI…KEHV) and 216 to 239 (HYEI…KKYL).

Post-translationally, phosphorylated by SERP2405.

Its subcellular location is the cytoplasm. In terms of biological role, probable member of the two-component regulatory system SERP2405/SERP2406. This is an uncharacterized protein from Staphylococcus epidermidis (strain ATCC 35984 / DSM 28319 / BCRC 17069 / CCUG 31568 / BM 3577 / RP62A).